Consider the following 124-residue polypeptide: UPF0344 protein BH2983 (124 aa).

The next 4 membrane-spanning stretches (helical) occupy residues 15–35 (GSWA…KAGK), 40–60 (KILH…GAGM), 61–81 (LVYW…IVLI), and 102–122 (IYWI…YNVI).

Belongs to the UPF0344 family.

The protein resides in the cell membrane. The protein is UPF0344 protein BH2983 of Halalkalibacterium halodurans (strain ATCC BAA-125 / DSM 18197 / FERM 7344 / JCM 9153 / C-125) (Bacillus halodurans).